Reading from the N-terminus, the 887-residue chain is Semaphorin-6B (887 aa).

Residues 1–26 form the signal peptide; that stretch reads MWTPRAPPPRPALLFLLLLLLRVTHG. Over 27–605 the chain is Extracellular; that stretch reads LFPDEPPPLS…VSVNLLVTSS (579 aa). The region spanning 32–525 is the Sema domain; sequence PPPLSVAPRD…FPRCVVRVPV (494 aa). N-linked (GlcNAc...) asparagine glycosylation is present at Asn-75. Disulfide bonds link Cys-117-Cys-127 and Cys-145-Cys-154. N-linked (GlcNAc...) asparagine glycosylation is found at Asn-156, Asn-168, and Asn-292. 2 disulfides stabilise this stretch: Cys-268/Cys-379 and Cys-293/Cys-338. Asn-387, Asn-442, and Asn-463 each carry an N-linked (GlcNAc...) asparagine glycan. Intrachain disulfides connect Cys-487/Cys-519, Cys-528/Cys-546, Cys-534/Cys-580, and Cys-538/Cys-554. The chain crosses the membrane as a helical span at residues 606-626; sequence VAAFVVGAVVSGFSVGWFVGL. The Cytoplasmic portion of the chain corresponds to 627–887; that stretch reads RERRELARRK…TGERTAPPVP (261 aa). 3 disordered regions span residues 656-675, 697-717, and 759-887; these read LGER…GGPG, HGGP…TPLP, and APEQ…PPVP. Residues 662 to 674 are compositionally biased toward gly residues; that stretch reads TGTGGRGGAGGGP. Arg-667 carries the post-translational modification Omega-N-methylarginine. A compositionally biased stretch (low complexity) spans 707-717; it reads LLPTPEQTPLP.

It belongs to the semaphorin family.

Its subcellular location is the cell membrane. Functionally, functions as a cell surface repellent for mossy fibers of developing neurons in the hippocampus where it plays a role in axon guidance. May function through the PLXNA4 receptor expressed by mossy cell axons. The sequence is that of Semaphorin-6B (Sema6b) from Rattus norvegicus (Rat).